A 64-amino-acid chain; its full sequence is Large ribosomal subunit protein bL33 (64 aa).

It belongs to the bacterial ribosomal protein bL33 family.

This is Large ribosomal subunit protein bL33 from Prochlorococcus marinus (strain MIT 9313).